A 153-amino-acid chain; its full sequence is Interleukin-4 (153 aa).

The first 24 residues, 1–24 (MGLTSQLLPPLFFLLACAGNFVHG), serve as a signal peptide directing secretion. 3 disulfide bridges follow: C27/C151, C48/C89, and C70/C123. N62 carries N-linked (GlcNAc...) asparagine glycosylation.

Belongs to the IL-4/IL-13 family. In terms of assembly, interacts with IL4R. Interacts with IL13RA1.

The protein resides in the secreted. In terms of biological role, cytokine secreted primarily by mast cells, T-cells, eosinophils, and basophils that plays a role in regulating antibody production, hematopoiesis and inflammation, and the development of effector T-cell responses. Induces the expression of class II MHC molecules on resting B-cells. Enhances both secretion and cell surface expression of IgE and IgG1. Also regulates the expression of the low affinity Fc receptor for IgE (CD23) on both lymphocytes and monocytes. Positively regulates IL31RA expression in macrophages. Stimulates autophagy in dendritic cells by interfering with mTORC1 signaling and through the induction of RUFY4. In addition, plays a critical role in higher functions of the normal brain, such as memory and learning. Upon binding to IL4, IL4R receptor dimerizes either with the common IL2R gamma chain/IL2RG to produce the type 1 signaling complex, located mainly on hematopoietic cells, or with the IL13RA1 to produce the type 2 complex, which is also expressed on nonhematopoietic cells. Engagement of both types of receptors initiates JAK3 and to a lower extend JAK1 phosphorylation leading to activation of the signal transducer and activator of transcription 6/STAT6. This Homo sapiens (Human) protein is Interleukin-4 (IL4).